We begin with the raw amino-acid sequence, 540 residues long: FAD-binding monooxygenase lolF1 (540 aa).

Residues 43-46 and 55-58 contribute to the FAD site; these read VWRE and DSLF. NADP(+) is bound by residues 53–55, 182–188, and 205–206; these read AVD, TGPSGVQ, and QS.

This sequence belongs to the FAD-binding monooxygenase family. FAD is required as a cofactor.

Its pathway is alkaloid biosynthesis. Functionally, FAD-binding monooxygenase; part of the gene cluster that mediates the biosynthesis of loline alkaloids, potent insecticidal agents composed of a pyrrolizidine ring system and an uncommon ether bridge linking carbons 2 and 7. Lolines are structurally differentiated by the various modifications of the L-amino group and include norloline, loline, N-methylloline, N-acetylloline, N-acetylnorloline, and N-formylloline. The first committed step is the condensation of O-acetyl-L-homoserine (derived from L-aspartic acid) and L-proline, probably catalyzed by the gamma-type pyridoxal 5'-phosphate(PLP)-dependent enzyme lolC, to give the diamino diacid, NACPP. Ensuing cyclization, decarboxylation, and acetylation steps yield 1-exo-acetamidopyrrolizidine (AcAP). LolO is required for installation of the ether bridge upon the pathway intermediate, 1-exo-acetamidopyrrolizidine (AcAP). In sequential 2-oxoglutarate- and O(2)-consuming steps, lolO removes hydrogens from C2 and C7 of AcAP to form both carbon-oxygen bonds in N-acetylnorloline (NANL), the precursor to all other lolines. The enzymes lolD, lolE, lolF and lolT have also been proposed to be involved in the ether-bridge installation. Further processing of the exocyclic moiety of NANL by fungal N-acetamidase (LolN), methyltransferase (LolM), and cytochrome P450 (LolP) enzymes, with occasional involvement of a plant acetyltransferase, generates the other known lolines. LolN transforms NANL to norlonine which is monomethylated and dimethylated to respectively lonine and N-methyllonine (NML) by lolM. LolP catalyzes hydroxylation of the methyl group in N-methylloline (NML) and further oxygenation to N-formylloline (NFL). A plant acetyltransferase is responsible for the acetylation of loline to form N-acetylloline (NAL). LolA might interact with aspartate kinase to prevent feedback inhibition of its activity by these end products and thereby promote production of L-homoserine from L-aspartate. In Epichloe uncinata (Endophyte fungus), this protein is FAD-binding monooxygenase lolF1.